Reading from the N-terminus, the 87-residue chain is MAKHLKFIARTVMVQEGNVEGAYRTLNRILTTDGLTEVISRRRYYEKPCRRRQRESYETCRRIYNMEMARKINFLMRKNRADPWLGC.

The protein belongs to the bacterial ribosomal protein bS21 family. Component of the mitochondrial ribosome small subunit (28S) which comprises a 12S rRNA and about 30 distinct proteins.

It is found in the mitochondrion. This is Small ribosomal subunit protein bS21m (Mrps21) from Mus musculus (Mouse).